A 251-amino-acid chain; its full sequence is Diphthine synthase (251 aa).

S-adenosyl-L-methionine-binding positions include Asp83, Leu86, 111 to 112 (SI), Leu163, and Leu205.

The protein belongs to the diphthine synthase family. As to quaternary structure, homodimer.

The catalysed reaction is 2-[(3S)-amino-3-carboxypropyl]-L-histidyl-[translation elongation factor 2] + 3 S-adenosyl-L-methionine = diphthine-[translation elongation factor 2] + 3 S-adenosyl-L-homocysteine + 3 H(+). It participates in protein modification; peptidyl-diphthamide biosynthesis. Functionally, S-adenosyl-L-methionine-dependent methyltransferase that catalyzes the trimethylation of the amino group of the modified target histidine residue in translation elongation factor 2 (EF-2), to form an intermediate called diphthine. The three successive methylation reactions represent the second step of diphthamide biosynthesis. In Pyrobaculum calidifontis (strain DSM 21063 / JCM 11548 / VA1), this protein is Diphthine synthase.